We begin with the raw amino-acid sequence, 54 residues long: MLSWAITFLIIAIVAAVLGFGGIAGTATGIAKILFVVFLVMFIASFFFGRRGRG.

A run of 2 helical transmembrane segments spans residues 4 to 24 and 29 to 49; these read WAIT…GGIA and GIAK…FFFG.

This sequence belongs to the UPF0391 family.

It localises to the cell membrane. In Pseudomonas fluorescens (strain ATCC BAA-477 / NRRL B-23932 / Pf-5), this protein is UPF0391 membrane protein PFL_0093.